The primary structure comprises 122 residues: Large ribosomal subunit protein uL14 (122 aa).

This sequence belongs to the universal ribosomal protein uL14 family. Part of the 50S ribosomal subunit. Forms a cluster with proteins L3 and L19. In the 70S ribosome, L14 and L19 interact and together make contacts with the 16S rRNA in bridges B5 and B8.

In terms of biological role, binds to 23S rRNA. Forms part of two intersubunit bridges in the 70S ribosome. This is Large ribosomal subunit protein uL14 from Sphingopyxis alaskensis (strain DSM 13593 / LMG 18877 / RB2256) (Sphingomonas alaskensis).